The primary structure comprises 413 residues: Zinc finger protein 821 (413 aa).

Residues 26–83 (RQAMMKTDFPGDLGSQRQAIQQLRDQDSSSSDSEGDEEETTQDEVSSHTSEEDGGVVK) form a disordered region. Residues 58–67 (SEGDEEETTQ) show a composition bias toward acidic residues. 2 consecutive C2H2-type zinc fingers follow at residues 117-141 (QLCQCPLCQLDCGSREQLIAHVYQH) and 151-173 (YMCPVCGRALSSPGSLGRHLLIH). Residues 260–367 (ALRRQNEPLE…EKMDMMLRAQ (108 aa)) are a coiled coil. A disordered region spans residues 279–320 (RTAKKSRRDNETPEEREVRRMRDREAKRLQRMQETDEQRARR).

The protein belongs to the krueppel C2H2-type zinc-finger protein family.

It is found in the nucleus. Its function is as follows. May be involved in transcriptional regulation. In Mus musculus (Mouse), this protein is Zinc finger protein 821 (Znf821).